We begin with the raw amino-acid sequence, 277 residues long: Pantothenate synthetase (277 aa).

26–33 (MGNLHEGH) contributes to the ATP binding site. H33 serves as the catalytic Proton donor. Q57 lines the (R)-pantoate pocket. Q57 serves as a coordination point for beta-alanine. 144 to 147 (GKKD) is an ATP binding site. (R)-pantoate is bound at residue Q150. ATP-binding positions include G173 and 181-184 (LSSR).

It belongs to the pantothenate synthetase family. Homodimer.

Its subcellular location is the cytoplasm. It carries out the reaction (R)-pantoate + beta-alanine + ATP = (R)-pantothenate + AMP + diphosphate + H(+). Its pathway is cofactor biosynthesis; (R)-pantothenate biosynthesis; (R)-pantothenate from (R)-pantoate and beta-alanine: step 1/1. Its function is as follows. Catalyzes the condensation of pantoate with beta-alanine in an ATP-dependent reaction via a pantoyl-adenylate intermediate. This Laribacter hongkongensis (strain HLHK9) protein is Pantothenate synthetase.